The primary structure comprises 346 residues: MFVDECVVKLQAGDGGRGCISFRREKYEPWGGPNGGDGGRGGDVILLGDDDTNNLVDYKYQPHWNAERGEHGLGKDQHGKDGAHRVLKMPLGTVVIDEATGKPVAEVVEDGQQIVLCKGGNGGWGNTHFKTATTRAPKRANDGHPGERGTYRLVLKSIADVGLVGFPNAGKSSLTCLITRARPRTAAYPFTTLHPQIGIIDYPPDRHGRRRLRLADVPGLIEGASENRGLGHRFLRHIERCALLLVLIDMAGTDGRDPREDYKHLLRELELYDPALLKKPRLVAANKMDVEAAAANLSKFKRRHRTVDVLPLSCLTSEGIELLKKELLKRVTALRGREKVSPRARD.

The region spanning 1–158 (MFVDECVVKL…GTYRLVLKSI (158 aa)) is the Obg domain. The OBG-type G domain occupies 159 to 332 (ADVGLVGFPN…LKKELLKRVT (174 aa)). Residues 165–172 (GFPNAGKS), 190–194 (FTTLH), 216–219 (DVPG), 286–289 (NKMD), and 313–315 (SCL) contribute to the GTP site. 2 residues coordinate Mg(2+): S172 and T192.

It belongs to the TRAFAC class OBG-HflX-like GTPase superfamily. OBG GTPase family. In terms of assembly, monomer. Mg(2+) is required as a cofactor.

Its subcellular location is the cytoplasm. Its function is as follows. An essential GTPase which binds GTP, GDP and possibly (p)ppGpp with moderate affinity, with high nucleotide exchange rates and a fairly low GTP hydrolysis rate. Plays a role in control of the cell cycle, stress response, ribosome biogenesis and in those bacteria that undergo differentiation, in morphogenesis control. This is GTPase Obg from Opitutus terrae (strain DSM 11246 / JCM 15787 / PB90-1).